The following is a 142-amino-acid chain: Hemoglobin subunit alpha (142 aa).

Ser-1 bears the N-acetylserine mark. Residues 1-142 (SLTAKSKSIV…VASALSEKYR (142 aa)) enclose the Globin domain. Residue His-59 participates in O2 binding. His-88 lines the heme b pocket.

It belongs to the globin family. In terms of assembly, heterotetramer of two alpha chains and two beta chains. In terms of tissue distribution, red blood cells.

Its function is as follows. Involved in oxygen transport from gills to the various peripheral tissues. This is Hemoglobin subunit alpha (hba) from Electrophorus electricus (Electric eel).